A 515-amino-acid chain; its full sequence is Tripartite motif-containing protein 5 (515 aa).

Alanine 2 carries the post-translational modification N-acetylalanine. The RING-type zinc-finger motif lies at 15 to 60 (CPICLELLTEPLSLPCGHSFCQACITANHKESMLYKEEERSCPVCR). Serine 87 carries the phosphoserine modification. The B box-type zinc finger occupies 92-133 (QKVDHCARHGEKLLLFCQEDSKVICWLCERSQEHRGHHTFLM). Cysteine 97, histidine 100, cysteine 119, and histidine 125 together coordinate Zn(2+). Positions 137-225 (AQEYHVKLQT…LTKSETEMVQ (89 aa)) form a coiled coil. The interval 187-200 (FEQLREILDWEESN) is required for interaction with GABARAP and for autophagy. Residues 283–515 (LKGMLDMFRE…VPMTLCSPSS (233 aa)) form the B30.2/SPRY domain.

The protein belongs to the TRIM/RBCC family. Can form homodimers and homotrimers. In addition to lower-order dimerization, also exhibits a higher-order multimerization and both low- and high-order multimerizations are essential for its restriction activity. Interacts with BTBD1 and BTBD2. Interacts with PSMC4, PSMC5, PSMD7 and HSPA8/HSC70. Interacts (via B30.2/SPRY domain) with HSPA1A/B. Interacts with PSMC2, MAP3K7/TAK1, TAB2 and TAB3. Interacts with SQSTM1. Interacts with TRIM6 and TRIM34. Interacts with ULK1 (phosphorylated form), GABARAP, GABARAPL1, GABARAPL2, MAP1LC3A, MAP1LC3C and BECN1. Post-translationally, degraded in a proteasome-independent fashion in the absence of viral infection but in a proteasome-dependent fashion following exposure to restriction sensitive virus. Autoubiquitinated in a RING finger- and UBE2D2-dependent manner. Monoubiquitinated by TRIM21. Deubiquitinated by Yersinia YopJ. Ubiquitination may not lead to proteasomal degradation.

It localises to the cytoplasm. Its subcellular location is the nucleus. It catalyses the reaction S-ubiquitinyl-[E2 ubiquitin-conjugating enzyme]-L-cysteine + [acceptor protein]-L-lysine = [E2 ubiquitin-conjugating enzyme]-L-cysteine + N(6)-ubiquitinyl-[acceptor protein]-L-lysine.. Its pathway is protein modification; protein ubiquitination. Its function is as follows. Capsid-specific restriction factor that prevents infection from non-host-adapted retroviruses. Blocks viral replication early in the life cycle, after viral entry but before reverse transcription. In addition to acting as a capsid-specific restriction factor, also acts as a pattern recognition receptor that activates innate immune signaling in response to the retroviral capsid lattice. Binding to the viral capsid triggers its E3 ubiquitin ligase activity, and in concert with the heterodimeric ubiquitin conjugating enzyme complex UBE2V1-UBE2N (also known as UBC13-UEV1A complex) generates 'Lys-63'-linked polyubiquitin chains, which in turn are catalysts in the autophosphorylation of the MAP3K7/TAK1 complex (includes TAK1, TAB2, and TAB3). Activation of the MAP3K7/TAK1 complex by autophosphorylation results in the induction and expression of NF-kappa-B and MAPK-responsive inflammatory genes, thereby leading to an innate immune response in the infected cell. Restricts infection by human immunodeficiency virus type 1 (HIV-1), simian immunodeficiency virus (SIV-mac) and N-tropic murine leukemia viruse (N-MLV). Plays a role in regulating autophagy through activation of autophagy regulator BECN1 by causing its dissociation from its inhibitors BCL2 and TAB2. In Chlorocebus tantalus (Tantalus monkey), this protein is Tripartite motif-containing protein 5 (TRIM5).